Consider the following 304-residue polypeptide: Acetyl-coenzyme A carboxylase carboxyl transferase subunit beta (304 aa).

A CoA carboxyltransferase N-terminal domain is found at 25-294 (LWIKCPETGE…KAVKRDTATE (270 aa)).

The protein belongs to the AccD/PCCB family. As to quaternary structure, acetyl-CoA carboxylase is a heterohexamer composed of biotin carboxyl carrier protein (AccB), biotin carboxylase (AccC) and two subunits each of ACCase subunit alpha (AccA) and ACCase subunit beta (AccD).

The protein localises to the cytoplasm. The enzyme catalyses N(6)-carboxybiotinyl-L-lysyl-[protein] + acetyl-CoA = N(6)-biotinyl-L-lysyl-[protein] + malonyl-CoA. The protein operates within lipid metabolism; malonyl-CoA biosynthesis; malonyl-CoA from acetyl-CoA: step 1/1. Functionally, component of the acetyl coenzyme A carboxylase (ACC) complex. Biotin carboxylase (BC) catalyzes the carboxylation of biotin on its carrier protein (BCCP) and then the CO(2) group is transferred by the transcarboxylase to acetyl-CoA to form malonyl-CoA. The protein is Acetyl-coenzyme A carboxylase carboxyl transferase subunit beta of Rhizobium meliloti (strain 1021) (Ensifer meliloti).